The following is a 629-amino-acid chain: Histone-lysine N-methyltransferase set9 (629 aa).

The SET domain occupies 120-234 (CPFEVTTTNR…IGEEITVSYG (115 aa)). Polar residues-rich tracts occupy residues 264 to 274 (SEASSTASTPA), 338 to 350 (EQNT…TTTD), 359 to 376 (NGVT…NQRA), and 390 to 400 (ESQNSSASTAP). Disordered regions lie at residues 264-400 (SEAS…STAP) and 586-629 (VSFG…RMTM). The segment covering 597-614 (SEPRTETEDSEACDERRN) has biased composition (basic and acidic residues).

Belongs to the class V-like SAM-binding methyltransferase superfamily. Histone-lysine methyltransferase family. Suvar4-20 subfamily.

The protein localises to the nucleus. It localises to the chromosome. The catalysed reaction is L-lysyl(20)-[histone H4] + 3 S-adenosyl-L-methionine = N(6),N(6),N(6)-trimethyl-L-lysyl(20)-[histone H4] + 3 S-adenosyl-L-homocysteine + 3 H(+). Its function is as follows. Histone methyltransferase that trimethylates 'Lys-20' of histone H4 to form H4K20me3. The protein is Histone-lysine N-methyltransferase set9 (set9) of Aspergillus terreus (strain NIH 2624 / FGSC A1156).